A 160-amino-acid polypeptide reads, in one-letter code: Phosphopantetheine adenylyltransferase (160 aa).

A substrate-binding site is contributed by Thr-9. ATP contacts are provided by residues 9–10 and His-17; that span reads TF. Substrate contacts are provided by Lys-41, Leu-73, and Arg-87. ATP contacts are provided by residues 88-90, Glu-98, and 123-129; these read GLR and LSYISST.

Belongs to the bacterial CoaD family. Homohexamer. The cofactor is Mg(2+).

The protein localises to the cytoplasm. It catalyses the reaction (R)-4'-phosphopantetheine + ATP + H(+) = 3'-dephospho-CoA + diphosphate. It participates in cofactor biosynthesis; coenzyme A biosynthesis; CoA from (R)-pantothenate: step 4/5. Reversibly transfers an adenylyl group from ATP to 4'-phosphopantetheine, yielding dephospho-CoA (dPCoA) and pyrophosphate. The sequence is that of Phosphopantetheine adenylyltransferase from Marinobacter nauticus (strain ATCC 700491 / DSM 11845 / VT8) (Marinobacter aquaeolei).